Consider the following 887-residue polypeptide: MSENLYNDVDPIETRDWVQAIESVIRREGHKRAHFLIEQVLKTAKINRKEFFRSSFTSDYINTISREDEYEYPGNLILEKRIRSAIRWNAIMMVLRASKKNLELGGHLSSFQSSATIYEVCFNHFFQAKNHKDGGDLVYFQGHISPGIYARSFLEGRLSEEQIDNFRQEVDGIGLSSYPHPKLMPNFWQFPTVSMGLGPLCAIYQAKFLKYLHNRELKNTSKQIVYAFLGDGEMDEPESKGAISIAVREKLDNLIFIINCNLQRLDGPVVGNGKIVNELESFFYGAGWKVIKVIWGSRWDCLLKKDTSGKLIQLMNETVDGDYQTFKSKDGAYVRKYFFGKYKETYDLVKDMTDEEIWKLNRGGHDPKKMFNALKKAKETKYKPTVILAHTVKGYGMGVIAEGKNIAHQIKKININGIIHIRDRFNIPVSNDEINKLPYVTFKKNSEEYCYIHSQRKKLGGYIPFRLSSFTGKLILPKLIDFQSLLEEQKKDISTTVAFIRVLNIILKNNSIKHLIVPIIADEARTFGMEGLFRKIGIYSSSGQKYTPQDREQLAYYKEEKKGQILQEGINELGAASSWLAAATSYSTNDFPMILFYIYYSIFGFQRIGDLFWAAGDQQARGFLIGGTSGRTTLNGEGLQHEDGHSHIQSLTIPNCISYDPAFAYEVAVIIQDGLRRMYGPSQENIYYYITTINENYYMPAMPIGVEEGICKGIYKLKTLHGTTSKVQLIGSGAILRSVCEAAEILLKDYSITTDIYSVTSFTELARNGEDCERWNMLHPNEKNKIAYVKQIMNKNPTVAATDYMKLFAEQIRHYIPSQEYHVLGTDGFGRSDSRDKLRDHFEVNAYYIVIAALNLLANINDIKKKVVEDAIMKFNIDANKINPRLS.

As to quaternary structure, homodimer. Part of the PDH complex, consisting of multiple copies of pyruvate dehydrogenase (E1), dihydrolipoamide acetyltransferase (E2) and lipoamide dehydrogenase (E3). The cofactor is thiamine diphosphate.

It carries out the reaction N(6)-[(R)-lipoyl]-L-lysyl-[protein] + pyruvate + H(+) = N(6)-[(R)-S(8)-acetyldihydrolipoyl]-L-lysyl-[protein] + CO2. Its function is as follows. Component of the pyruvate dehydrogenase (PDH) complex, that catalyzes the overall conversion of pyruvate to acetyl-CoA and CO(2). In Buchnera aphidicola subsp. Acyrthosiphon pisum (strain APS) (Acyrthosiphon pisum symbiotic bacterium), this protein is Pyruvate dehydrogenase E1 component (aceE).